A 513-amino-acid polypeptide reads, in one-letter code: Cytochrome P450 monooxygenase CYP3 (513 aa).

The tract at residues 1–21 (MLPRSLGHSTSELSPPFDGPN) is disordered. Cys451 is a heme binding site.

The protein belongs to the cytochrome P450 family. Requires heme as cofactor.

The protein operates within secondary metabolite biosynthesis. Cytochrome P450 monooxygenase; part of the gene cluster that mediates the biosynthesis of a tyrosine-derived cytochalasan acting as a fungal signal recognized by resistant rice plants and leads to avirulence in Pi33 resistant rice cultivars. The first step in the pathway is catalyzed by the hybrid PKS-NRPS ACE1, assisted by the enoyl reductase RAP1, that are responsible for fusion of the tyrosine precursor and the polyketide backbone. The polyketide synthase module (PKS) of ACE1 is responsible for the synthesis of the polyketide backbone and the downstream nonribosomal peptide synthetase (NRPS) amidates the carboxyl end of the polyketide with the tyrosine precursor. Because ACE1 lacks a designated enoylreductase (ER) domain, the required activity is provided the enoyl reductase RAP1. Reduction by the hydrolyase ORFZ, followed by dehydration and intra-molecular Diels-Alder cyclization by the Diels-Alderase ORF3 then yield the required isoindolone-fused macrocycle. A number of oxidative steps catalyzed by the tailoring enzymes identified within the cluster, including cytochrome P450 monooxygenases CYP1 to CYP4, the FAD-linked oxidoreductase OXR2 and the short-chain dehydrogenase/reductase OXR1, are further required to afford the final cytochalasans that confer avirulence and which have still to be identified. The monooxygenase CYP1 has been shown to be a site-selective C-18 hydroxylase whereas the function of CYP3 is the site-selective epoxidation of the C-6/C-7 olefin that is present in some intermediate compounds. Finally, SYN2 and RAP2 are not required for avirulence in Pi33 resistant rice cultivars. In Pyricularia oryzae (strain 70-15 / ATCC MYA-4617 / FGSC 8958) (Rice blast fungus), this protein is Cytochrome P450 monooxygenase CYP3.